A 70-amino-acid polypeptide reads, in one-letter code: MPGIKVYPNESFDEAYRRFKKQTDRNLVVTEVSARRFFEPMTEIRKKQKISARKKMLKRLYMLRRYESKL.

Belongs to the bacterial ribosomal protein bS21 family.

The chain is Small ribosomal subunit protein bS21 from Campylobacter hominis (strain ATCC BAA-381 / DSM 21671 / CCUG 45161 / LMG 19568 / NCTC 13146 / CH001A).